A 130-amino-acid chain; its full sequence is Small ribosomal subunit protein uS9 (130 aa).

This sequence belongs to the universal ribosomal protein uS9 family.

This Teredinibacter turnerae (strain ATCC 39867 / T7901) protein is Small ribosomal subunit protein uS9.